Consider the following 636-residue polypeptide: Threonine--tRNA ligase (636 aa).

Positions 1 to 63 (MNEINVTLPD…ADGARVEIIT (63 aa)) constitute a TGS domain. The catalytic stretch occupies residues 243 to 534 (DHRKLGRELD…LIEHFAGNFP (292 aa)). Residues cysteine 335, histidine 386, and histidine 511 each coordinate Zn(2+).

Belongs to the class-II aminoacyl-tRNA synthetase family. Homodimer. Zn(2+) serves as cofactor.

Its subcellular location is the cytoplasm. It catalyses the reaction tRNA(Thr) + L-threonine + ATP = L-threonyl-tRNA(Thr) + AMP + diphosphate + H(+). Functionally, catalyzes the attachment of threonine to tRNA(Thr) in a two-step reaction: L-threonine is first activated by ATP to form Thr-AMP and then transferred to the acceptor end of tRNA(Thr). Also edits incorrectly charged L-seryl-tRNA(Thr). The sequence is that of Threonine--tRNA ligase from Citrifermentans bemidjiense (strain ATCC BAA-1014 / DSM 16622 / JCM 12645 / Bem) (Geobacter bemidjiensis).